The following is a 160-amino-acid chain: Large ribosomal subunit protein uL16 (160 aa).

It belongs to the universal ribosomal protein uL16 family. As to quaternary structure, part of the 50S ribosomal subunit.

Its function is as follows. Binds 23S rRNA and is also seen to make contacts with the A and possibly P site tRNAs. In Prochlorococcus marinus (strain MIT 9515), this protein is Large ribosomal subunit protein uL16.